The chain runs to 948 residues: RNA polymerase-associated protein RapA (948 aa).

In terms of domain architecture, Helicase ATP-binding spans 164–332; the sequence is EVADRSAPRV…FARLRLLDPN (169 aa). Position 177 to 184 (177 to 184) interacts with ATP; sequence DEVGLGKT. Residues 278–281 carry the DEAH box motif; that stretch reads DEAH. The Helicase C-terminal domain occupies 473 to 627; that stretch reads RVDWLIDTLK…TCPTGNALQH (155 aa).

It belongs to the SNF2/RAD54 helicase family. RapA subfamily. As to quaternary structure, interacts with the RNAP. Has a higher affinity for the core RNAP than for the holoenzyme. Its ATPase activity is stimulated by binding to RNAP.

In terms of biological role, transcription regulator that activates transcription by stimulating RNA polymerase (RNAP) recycling in case of stress conditions such as supercoiled DNA or high salt concentrations. Probably acts by releasing the RNAP, when it is trapped or immobilized on tightly supercoiled DNA. Does not activate transcription on linear DNA. Probably not involved in DNA repair. This Pseudomonas putida (strain W619) protein is RNA polymerase-associated protein RapA.